Reading from the N-terminus, the 461-residue chain is Kynureninase (461 aa).

Pyridoxal 5'-phosphate-binding positions include leucine 114, threonine 115, 142 to 145 (FPSD), aspartate 228, histidine 231, and tyrosine 253. Position 254 is an N6-(pyridoxal phosphate)lysine (lysine 254). Tryptophan 288 and asparagine 316 together coordinate pyridoxal 5'-phosphate.

Belongs to the kynureninase family. Homodimer. The cofactor is pyridoxal 5'-phosphate.

The protein resides in the cytoplasm. It carries out the reaction L-kynurenine + H2O = anthranilate + L-alanine + H(+). It catalyses the reaction 3-hydroxy-L-kynurenine + H2O = 3-hydroxyanthranilate + L-alanine + H(+). It functions in the pathway amino-acid degradation; L-kynurenine degradation; L-alanine and anthranilate from L-kynurenine: step 1/1. Its pathway is cofactor biosynthesis; NAD(+) biosynthesis; quinolinate from L-kynurenine: step 2/3. Its function is as follows. Catalyzes the cleavage of L-kynurenine (L-Kyn) and L-3-hydroxykynurenine (L-3OHKyn) into anthranilic acid (AA) and 3-hydroxyanthranilic acid (3-OHAA), respectively. In Lodderomyces elongisporus (strain ATCC 11503 / CBS 2605 / JCM 1781 / NBRC 1676 / NRRL YB-4239) (Yeast), this protein is Kynureninase.